We begin with the raw amino-acid sequence, 61 residues long: Small ribosomal subunit protein bS21 (61 aa).

The interval 34–61 (KREHYESPSVKRKKKSEAARKRKYKYNK) is disordered. Over residues 43 to 61 (VKRKKKSEAARKRKYKYNK) the composition is skewed to basic residues.

It belongs to the bacterial ribosomal protein bS21 family.

This chain is Small ribosomal subunit protein bS21, found in Thermoanaerobacter pseudethanolicus (strain ATCC 33223 / 39E) (Clostridium thermohydrosulfuricum).